Here is a 262-residue protein sequence, read N- to C-terminus: Snake venom serine protease (262 aa).

A signal peptide spans 1 to 18 (MVLIRVLANLLILQLSYA). A propeptide spanning residues 19 to 24 (QKSSEL) is cleaved from the precursor. One can recognise a Peptidase S1 domain in the interval 25 to 253 (VIGGDECNIN…YTEWIQSIIA (229 aa)). 6 cysteine pairs are disulfide-bonded: Cys31–Cys167, Cys50–Cys66, Cys102–Cys260, Cys146–Cys214, Cys178–Cys193, and Cys204–Cys229. Catalysis depends on charge relay system residues His65 and Asp114. Residues Asn125 and Asn158 are each glycosylated (N-linked (GlcNAc...) asparagine). The active-site Charge relay system is the Ser208.

The protein belongs to the peptidase S1 family. Snake venom subfamily. As to quaternary structure, monomer. In terms of tissue distribution, expressed by the venom gland.

The protein localises to the secreted. Snake venom serine protease that may act in the hemostasis system of the prey. In Crotalus durissus durissus (Central American rattlesnake), this protein is Snake venom serine protease.